Reading from the N-terminus, the 774-residue chain is Lysyl oxidase homolog 2 (774 aa).

A signal peptide spans 1–25 (MERRGSSCLCRCLALLALLPTLSLA). 4 consecutive SRCR domains span residues 58 to 159 (LRLA…VVCS), 188 to 302 (IRAI…VSCV), 326 to 425 (VRLR…VRCN), and 435 to 544 (LRLN…VACS). Disulfide bonds link Cys-84/Cys-148, Cys-97/Cys-158, Cys-128/Cys-138, Cys-218/Cys-291, Cys-231/Cys-301, Cys-265/Cys-275, Cys-351/Cys-414, Cys-364/Cys-424, and Cys-395/Cys-405. Asn-288 carries N-linked (GlcNAc...) asparagine glycosylation. N-linked (GlcNAc...) asparagine glycosylation occurs at Asn-455. Disulfide bonds link Cys-464/Cys-530, Cys-477/Cys-543, and Cys-511/Cys-521. A lysyl-oxidase like region spans residues 548–751 (PDLVLNAEIV…WMYNCHIGGS (204 aa)). Asp-549 and Leu-550 together coordinate Ca(2+). 4 cysteine pairs are disulfide-bonded: Cys-573-Cys-625, Cys-579-Cys-695, Cys-657-Cys-673, and Cys-663-Cys-685. His-626, His-628, and His-630 together coordinate Cu cation. The N-linked (GlcNAc...) asparagine glycan is linked to Asn-644. The lysine tyrosylquinone (Lys-Tyr) cross-link spans 653-689 (KASFCLEDTECEGDIQKSYECANFGEQGITMGCWDMY). Residue Tyr-689 is modified to 2',4',5'-topaquinone. Glu-722, Asp-724, Asn-727, and Asn-728 together coordinate Ca(2+). Cys-732 and Cys-746 form a disulfide bridge.

It belongs to the lysyl oxidase family. Component of some chromatin repressor complex. Interacts with SNAI1. Interacts with TAF10. Interacts with HSPA5. Interacts with EFEMP2. It depends on Cu cation as a cofactor. Requires lysine tyrosylquinone residue as cofactor. Post-translationally, the lysine tyrosylquinone cross-link (LTQ) is generated by condensation of the epsilon-amino group of a lysine with a topaquinone produced by oxidation of tyrosine. N-glycosylated. N-glycosylation on Asn-455 and Asn-644 may be essential for proper folding and secretion; may be composed of a fucosylated carbohydrates attached to a trimannose N-linked glycan core.

The protein localises to the secreted. It is found in the extracellular space. Its subcellular location is the extracellular matrix. The protein resides in the basement membrane. It localises to the nucleus. The protein localises to the chromosome. It is found in the endoplasmic reticulum. The catalysed reaction is L-lysyl-[protein] + O2 + H2O = (S)-2-amino-6-oxohexanoyl-[protein] + H2O2 + NH4(+). With respect to regulation, specifically inhibited by a mouse monoclonal antibody AB0023, inhibition occurs in a non-competitive manner. Mediates the post-translational oxidative deamination of lysine residues on target proteins leading to the formation of deaminated lysine (allysine). Acts as a transcription corepressor and specifically mediates deamination of trimethylated 'Lys-4' of histone H3 (H3K4me3), a specific tag for epigenetic transcriptional activation. Shows no activity against histone H3 when it is trimethylated on 'Lys-9' (H3K9me3) or 'Lys-27' (H3K27me3) or when 'Lys-4' is monomethylated (H3K4me1) or dimethylated (H3K4me2). Also mediates deamination of methylated TAF10, a member of the transcription factor IID (TFIID) complex, which induces release of TAF10 from promoters, leading to inhibition of TFIID-dependent transcription. LOXL2-mediated deamination of TAF10 results in transcriptional repression of genes required for embryonic stem cell pluripotency including POU5F1/OCT4, NANOG, KLF4 and SOX2. Involved in epithelial to mesenchymal transition (EMT) via interaction with SNAI1 and participates in repression of E-cadherin CDH1, probably by mediating deamination of histone H3. During EMT, involved with SNAI1 in negatively regulating pericentromeric heterochromatin transcription. SNAI1 recruits LOXL2 to pericentromeric regions to oxidize histone H3 and repress transcription which leads to release of heterochromatin component CBX5/HP1A, enabling chromatin reorganization and acquisition of mesenchymal traits. Interacts with the endoplasmic reticulum protein HSPA5 which activates the IRE1-XBP1 pathway of the unfolded protein response, leading to expression of several transcription factors involved in EMT and subsequent EMT induction. When secreted into the extracellular matrix, promotes cross-linking of extracellular matrix proteins by mediating oxidative deamination of peptidyl lysine residues in precursors to fibrous collagen and elastin. Acts as a regulator of sprouting angiogenesis, probably via collagen IV scaffolding. Acts as a regulator of chondrocyte differentiation, probably by regulating expression of factors that control chondrocyte differentiation. The protein is Lysyl oxidase homolog 2 (LOXL2) of Bos taurus (Bovine).